Reading from the N-terminus, the 143-residue chain is Auxin-responsive protein SAUR67 (143 aa).

It belongs to the ARG7 family.

The protein resides in the cell membrane. Functionally, may promote auxin-stimulated organ elongation, such as hypocotyls, stamen filaments and petals. In Arabidopsis thaliana (Mouse-ear cress), this protein is Auxin-responsive protein SAUR67.